The chain runs to 279 residues: Orotidine 5'-phosphate decarboxylase (279 aa).

Residues aspartate 8, lysine 30, 58-67, threonine 117, arginine 177, glutamine 186, glycine 206, and arginine 207 contribute to the substrate site; that span reads DLKFHDIPNT. Lysine 60 acts as the Proton donor in catalysis.

It belongs to the OMP decarboxylase family. Type 1 subfamily. In terms of assembly, homodimer.

It carries out the reaction orotidine 5'-phosphate + H(+) = UMP + CO2. The protein operates within pyrimidine metabolism; UMP biosynthesis via de novo pathway; UMP from orotate: step 2/2. Catalyzes the decarboxylation of orotidine 5'-monophosphate (OMP) to uridine 5'-monophosphate (UMP). The chain is Orotidine 5'-phosphate decarboxylase from Campylobacter jejuni subsp. jejuni serotype O:2 (strain ATCC 700819 / NCTC 11168).